Reading from the N-terminus, the 1461-residue chain is MNRIFKVLWNAATGTFVVTSETAKSRGKKNGRRKLAVSALIGLSSIMVSADALANAGNDTGDGVTPTGTQTGGKGWIAIGTDATANTYTNVDGASAAMGYKASAMGKWSTAIGSYSQSTGDSSLALGVKSVSAGDRAIAMGASSSASGSYSMAMGVYANSSGAKSVALGYKSVASGATSSALGYQATASGDDSAAFGNGAKAIGTNSVALGSGSVAQEDNSVAVGNSTTQRQITYVAKGDINSTSTDAVTGAQIYSLSQSVADRLGGGASVNSDGTVNAPLYEVGTGIYNNVGSALSALNTSITNTEASVAGLAEDALLWDESISAFSASHTGNASKITNLAAGTLAADSTDAVNGSQLFDTNEKVDKNTADIATNTGSINQNTADITANTDSINQNTTDIAANTTSINQNTTDIATNTTNINSLSDSVTTLTDDALLWDAASGAFSAKHNGSDSKITNLAAGTLAADSTDAVNGSQLFDTNEKVDQNTADITTNTNSINQNTTDIATNTTNINNLSDSITTLTDDALLWDAASGAFSANHNGSASKITNLAAGTLAADSTDAVNGSQLFATNENVSQNTADITTNTNSINQNTTDIATNTTSINNLSDSITTLTDDALLWDAASGTFSASRSGSASKITNLAAGTLAADSTDAVNGSQLYETNQKVDQNTSAIADINTSITNLSSDNLSWNETTSSFSASHGSSTTNKITNVAAGELSEESTDAVNGSQLFETNEKVDQNTTDIAANTTNITQNSTAIENLNTSVSDINTSITGLTDNALLWDEDTGAFSANHGGSTSKITNVAAGALSEDSTDAVNGSQLYETNQKVDQNTSAIADINTSITNLGTDALSWDDEEGAFSASHGTSGTNKITNVAAGEIASDSTDAVNGSQLYETNMLISQYNESISQLAGDTSETYITENGTGVKYIRTNDNGLEGQDAYATGNGATAVGYDAVASGAGSLALGQNSSSSIEGSIALGSGSTSNRAITTGIRETSATSDGVVIGYNTTDRELLGALSLGTDGESYRQITNVADGSEAQDAVTVRQLQNAIGAVTTTPTKYYHANSTEEDSLAVGTDSLAMGAKTIVNADAGIGIGLNTLVMADAINGIAIGSNARANHANSIAMGNGSQTTRGAQTDYTAYNMDTPQNSVGEFSVGSEDGQRQITNVAAGSADTDAVNVGQLKVTDAQVSRNTQSITNLNTQVSNLDTRVTNIENGIGDIVTTGSTKYFKTNTDGADANAQGADSVAIGSGSIAAAENSVALGTNSVADEANTVSVGSSTQQRRITNVAAGVNNTDAVNVAQLKASEAGSVRYETNADGSVNYSVLNLGDGSGGTTRIGNVSAAVNDTDAVNYAQLKRSVEEANTYTDQKMGEMNSKIKGVENKMSGGIASAMAMAGLPQAYAPGANMTSIAGGTFNGESAVAIGVSMVSESGGWVYKLQGTSNSQGDYSAAIGAGFQW.

The N-terminal stretch at 1–54 (MNRIFKVLWNAATGTFVVTSETAKSRGKKNGRRKLAVSALIGLSSIMVSADALA) is a signal peptide. The surface exposed passenger domain stretch occupies residues 55–1372 (NAGNDTGDGV…EEANTYTDQK (1318 aa)). Residues 1373 to 1461 (MGEMNSKIKG…SAAIGAGFQW (89 aa)) are translocator domain. A run of 4 beta stranded transmembrane segments spans residues 1407–1417 (GANMTSIAGGT), 1421–1431 (ESAVAIGVSMV), 1440–1446 (KLQGTSN), and 1450–1461 (DYSAAIGAGFQW).

It belongs to the autotransporter-2 (AT-2) (TC 1.B.40) family. Homotrimer.

It is found in the cell surface. It localises to the cell outer membrane. Its function is as follows. Involved in cell aggregation, biofilm formation, and adhesion to human intestinal epithelial cells. The protein is Autotransporter adhesin SadA of Salmonella typhimurium (strain LT2 / SGSC1412 / ATCC 700720).